The sequence spans 156 residues: MDKKVTEVVEALAQPIVEELNLELVDVEYVKEGKDWFLRVFIDSETGVDIEECGAVSERLSEALDKEDPIPHLYFLDVSSPGAERPLKKEKDFEQAVGSQVAIKTYEPIDGEKMFEGKLLSYDGTTITLLLTIKTRKKEIQIPMDKVANARLAVTF.

Belongs to the RimP family.

Its subcellular location is the cytoplasm. Functionally, required for maturation of 30S ribosomal subunits. The chain is Ribosome maturation factor RimP from Bacillus cytotoxicus (strain DSM 22905 / CIP 110041 / 391-98 / NVH 391-98).